The chain runs to 411 residues: Cladofulvin cluster transcriptional coactivator claA (411 aa).

A compositionally biased stretch (polar residues) spans 1–27 (MSDSLAGNGMRQNLNRSSTSSNHTGHA). A disordered region spans residues 1 to 32 (MSDSLAGNGMRQNLNRSSTSSNHTGHAQNGRA). An HTH iclR-type domain is found at 47–117 (LACQVQSLAC…DPGHIAHTAL (71 aa)). Residues 77–96 (LHDVAELANVPASQLSRVVR) constitute a DNA-binding region (H-T-H motif).

The protein resides in the nucleus. Transcriptional coactivator; part of the gene cluster that mediates the biosynthesis of cladofulvin, a conidial pigment not required for virulence but that plays a role in fitness and resistance to environmental stresses including UV light and low-temperature stress. With claE, coregulates the production of cladofulvin. In Passalora fulva (Tomato leaf mold), this protein is Cladofulvin cluster transcriptional coactivator claA.